Here is an 89-residue protein sequence, read N- to C-terminus: Small ribosomal subunit protein uS15 (89 aa).

Belongs to the universal ribosomal protein uS15 family. Part of the 30S ribosomal subunit. Forms a bridge to the 50S subunit in the 70S ribosome, contacting the 23S rRNA.

One of the primary rRNA binding proteins, it binds directly to 16S rRNA where it helps nucleate assembly of the platform of the 30S subunit by binding and bridging several RNA helices of the 16S rRNA. Functionally, forms an intersubunit bridge (bridge B4) with the 23S rRNA of the 50S subunit in the ribosome. This is Small ribosomal subunit protein uS15 from Allorhizobium ampelinum (strain ATCC BAA-846 / DSM 112012 / S4) (Agrobacterium vitis (strain S4)).